The following is a 368-amino-acid chain: Phosphate acyltransferase (368 aa).

Belongs to the PlsX family. As to quaternary structure, homodimer. Probably interacts with PlsY.

Its subcellular location is the cytoplasm. The catalysed reaction is a fatty acyl-[ACP] + phosphate = an acyl phosphate + holo-[ACP]. The protein operates within lipid metabolism; phospholipid metabolism. Its function is as follows. Catalyzes the reversible formation of acyl-phosphate (acyl-PO(4)) from acyl-[acyl-carrier-protein] (acyl-ACP). This enzyme utilizes acyl-ACP as fatty acyl donor, but not acyl-CoA. The polypeptide is Phosphate acyltransferase (Herpetosiphon aurantiacus (strain ATCC 23779 / DSM 785 / 114-95)).